A 201-amino-acid polypeptide reads, in one-letter code: Myelomonocytic growth factor (201 aa).

An N-terminal signal peptide occupies residues 1-23; that stretch reads MCCLTPVLALALVLGAPWQALHG. 2 disulfides stabilise this stretch: Cys-61-Cys-67 and Cys-89-Cys-99. 2 N-linked (GlcNAc...) asparagine glycosylation sites follow: Asn-123 and Asn-137.

The protein belongs to the IL-6 superfamily.

It localises to the secreted. Its function is as follows. Hematopoietic growth factor that stimulates the proliferation and colony formation of normal and transformed avian cells of the myeloid lineage. In Gallus gallus (Chicken), this protein is Myelomonocytic growth factor.